Consider the following 872-residue polypeptide: MGTTASAAQQVPSTVPSSENVQGNGSGSSNVEDRNSLSTQSFQNVSIHNKAKSIITNKVAPVVITYNCKEEFQIHDDLLKANYSVGRISETMPEHYLVQGKYFMVHDVYSKLDVLNTTSSCGAPNFRQARGGYEVYGMGQPSLNGFKQVLQKLQSNGHKECVFFCVREEPVLFLKLEDDFVPYTPRRKENLHENLHDLEKGLRAENLELAIRKELHDFAQLSGNSYYVYNDIEHFKDEPHSIIIHCEEDIHVTEEVYNRPVFLLPAYRYHRLPLPMDGAPLETQFDAFVNILRENPSLLLLHDANHPPPALLFSCQTGVGRTNLAMILGTLVLYHRKGACEKQTISQDTNVLPKQRFQVIQNFINMVPNGEAIVDEVDKAIELCSEMHDIKAALYECKKKLEGIGEGYQIQGSSTKEYFLKGTLHSLERYFYLITFNYYLHEQYPLAFALSFSKWMCTQPWIYRLQASLNLSELTLSGELITKGTRVLVLDDRFSPDVLSTLKEMNVANFRRVPKMPVYGTAQPSLKATGSVLSYLTDAKRKYSNILWVNLREDVILEANEQIFTPREPDNLEQQIAVPAASPEQLEKLEATVANHVLTSQKWLEVYLEQEKQMKMFKTCRTMQEIFNQHRSAYPGLVYRRIPIPDFCAPREQDFDMLLQSMKSMLAEDSSAAFVFNCHGGKGRTTTAMVIAVLTLWHFNSIPEITEDEIVSVPDAKYTKGEFEVVMKIVQLLPDGHKIKKEVDMALDSISETMTPMHYHLREIIICTYRQVKTAKNSKEMRLLQLRSLQYLERYIYLILFNAYLHLEKKDTWQRPFSTWMYEVASKAGVYEVLNQLGFSEFENAEEQPLCRLRYRWQQQNTNLLPFRGEFI.

The segment at 1–37 (MGTTASAAQQVPSTVPSSENVQGNGSGSSNVEDRNSL) is disordered. Gly2 carries N-myristoyl glycine lipidation. Positions 186-210 (RRKENLHENLHDLEKGLRAENLELA) form a coiled coil.

It belongs to the paladin family.

The protein resides in the cytoplasm. It is found in the cytosol. The chain is Paladin (pald1) from Xenopus tropicalis (Western clawed frog).